The chain runs to 215 residues: Ras-related protein Rab-5A (215 aa).

GTP is bound by residues S29, A30, G32, K33, S34, S35, H46, E47, T52, and G78. Mg(2+) is bound at residue S34. 2 consecutive short sequence motifs (switch) follow at residues 44–56 and 77–93; these read QFHEFQESTIGAA and AGQERYHSLAPMYYRGA. T52 contacts Mg(2+). The residue at position 84 (S84) is a Phosphoserine. N133, K134, D136, A164, and K165 together coordinate GTP. Positions 185–215 are disordered; sequence EPQNPGINCTRGRGVDLTEPTQPTRSQCCSN. Over residues 203–215 the composition is skewed to polar residues; it reads EPTQPTRSQCCSN. Residues C212 and C213 are each lipidated (S-geranylgeranyl cysteine).

Belongs to the small GTPase superfamily. Rab family. Interacts with GDI1; this promotes dissociation from membranes; phosphorylation at Ser-84 disrupts this interaction. Interacts with GDI2; phosphorylation at Ser-84 disrupts the interaction. Interacts with SGSM1 and SGSM3. Interacts with PIK3CB. Interacts with RIN1 and GAPVD1, which regulate its pathway, probably by acting as a GEF. Interacts with RINL. Interacts with ALS2CL, SUN2, ZFYVE20 and RUFY1. Interacts with RABEP1; one RABEP1 homodimer binds two RAB5A chains, but at opposite sides of the dimer. Interacts with OCRL and INPP5F. May be a component of a complex composed of RAB5A, DYN2 and PIK3C3. Does not interact with the BLOC-3 complex (heterodimer of HPS1 and HPS4). Interacts with CLN5. Interacts with APPL2. Interacts with F8A1/F8A2/F8A3. Found in a complex with F8A1/F8A2/F8A3, HTT and RAB5A; mediates the recruitment of HTT by RAB5A onto early endosomes. Interacts with ATP9A. Interacts with PPP1R21; mediates the recruitment of FERRY complex by RAB5A onto early endosomes. Requires Mg(2+) as cofactor. Post-translationally, phosphorylation of Ser-84 in the switch II region by LRRK2 prevents the association of RAB regulatory proteins, including RAB GDP dissociation inhibitors GDI1 and GDI2.

It localises to the cell membrane. It is found in the early endosome membrane. The protein resides in the melanosome. The protein localises to the cytoplasmic vesicle. Its subcellular location is the cell projection. It localises to the ruffle. It is found in the membrane. The protein resides in the cytoplasm. The protein localises to the cytosol. Its subcellular location is the phagosome membrane. It localises to the endosome membrane. The catalysed reaction is GTP + H2O = GDP + phosphate + H(+). With respect to regulation, regulated by guanine nucleotide exchange factors (GEFs) including RINL, which promote the exchange of bound GDP for free GTP. Regulated by GTPase activating proteins (GAPs) which increase the GTP hydrolysis activity. Inhibited by GDP dissociation inhibitors (GDIs). The small GTPases Rab are key regulators of intracellular membrane trafficking, from the formation of transport vesicles to their fusion with membranes. Rabs cycle between an inactive GDP-bound form and an active GTP-bound form that is able to recruit to membranes different sets of downstream effectors directly responsible for vesicle formation, movement, tethering and fusion. RAB5A is required for the fusion of plasma membranes and early endosomes. Contributes to the regulation of filopodia extension. Required for the exosomal release of SDCBP, CD63, PDCD6IP and syndecan. Regulates maturation of apoptotic cell-containing phagosomes, probably downstream of DYN2 and PIK3C3. The sequence is that of Ras-related protein Rab-5A (RAB5A) from Sus scrofa (Pig).